The following is a 166-amino-acid chain: Large ribosomal subunit protein uL10 (166 aa).

It belongs to the universal ribosomal protein uL10 family. In terms of assembly, part of the ribosomal stalk of the 50S ribosomal subunit. The N-terminus interacts with L11 and the large rRNA to form the base of the stalk. The C-terminus forms an elongated spine to which L12 dimers bind in a sequential fashion forming a multimeric L10(L12)X complex.

Functionally, forms part of the ribosomal stalk, playing a central role in the interaction of the ribosome with GTP-bound translation factors. The sequence is that of Large ribosomal subunit protein uL10 from Shewanella amazonensis (strain ATCC BAA-1098 / SB2B).